Consider the following 579-residue polypeptide: MTDQQSRPASPRRRSTQSIADRLALDALYEIAKTFAAAPDPVAEVPQIFNVLSSFLDLRHGVLALLAEPGEGAGVNPYVIAATAFQRSPEAPAADVLPDAVARIVFRSGVPFVSFDLAAEFGAEAVPKRLRDAGQTLIAVPLRDPERSHFVLGVLAAYRSHDHNRSGFSDADVRVLTMVASLLEQALRFRRRIARDRERALEDTRRMLQTVTEQRGPAAPVSLDGIVGSSPAIAEVVAQIKRVASTRMPVLLRGESGTGKELFARAVHAQSPRAKGPFIRVNCAALSETLLESELFGHEKGAFTGATALKKGRFELADGGTLFLDEIGEISPAFQSKLLRVLQEGEFERVGGAKTIKVDTRIVAATNRDLEDAVARGQFRADLYFRICVVPIVLPPLRNRKSDIKPLAQLFLDRFNKQNATNVKFAADAFDQICRCQFPGNVRELENCVNRAAALSDGAIVLAEELACRQGACLSAELFRLQDGTSPIGGLAVGRVITPTVRVSAPPPEPAPAPEPAPEAPPREEVPLRTKTAQLSREELLRALESAGWVQAKAARLLGMTPRQIAYALQKFEIELRKI.

Residues 40 to 187 form the GAF domain; the sequence is DPVAEVPQIF…MVASLLEQAL (148 aa). The Sigma-54 factor interaction domain occupies 226–454; sequence IVGSSPAIAE…LENCVNRAAA (229 aa). ATP-binding positions include 254–261 and 317–326; these read GESGTGKE and ADGGTLFLDE. The inter-domain linker stretch occupies residues 464–536; sequence EELACRQGAC…PLRTKTAQLS (73 aa). The a divalent metal cation site is built by Cys-468 and Cys-473. A disordered region spans residues 502–529; sequence RVSAPPPEPAPAPEPAPEAPPREEVPLR. A run of 7 repeats spans residues 505–506, 507–508, 509–510, 511–512, 513–514, 515–516, and 517–518. Positions 505-518 are 7 X 2 AA tandem repeats of X-P; the sequence is APPPEPAPAPEPAP. Over residues 505–520 the composition is skewed to pro residues; that stretch reads APPPEPAPAPEPAPEA. The segment at 537–579 is C-terminal DNA-binding domain; the sequence is REELLRALESAGWVQAKAARLLGMTPRQIAYALQKFEIELRKI. A DNA-binding region (H-T-H motif) is located at residues 551-570; that stretch reads QAKAARLLGMTPRQIAYALQ.

Interacts with sigma-54.

Its function is as follows. Required for activation of most nif operons, which are directly involved in nitrogen fixation. This chain is Nif-specific regulatory protein (nifA1), found in Rhodobacter capsulatus (strain ATCC BAA-309 / NBRC 16581 / SB1003).